A 511-amino-acid chain; its full sequence is Bifunctional purine biosynthesis protein PurH (511 aa).

The MGS-like domain occupies 1–147; the sequence is MIQIKRALIS…KNYKHTLVLT (147 aa).

The protein belongs to the PurH family.

It catalyses the reaction (6R)-10-formyltetrahydrofolate + 5-amino-1-(5-phospho-beta-D-ribosyl)imidazole-4-carboxamide = 5-formamido-1-(5-phospho-D-ribosyl)imidazole-4-carboxamide + (6S)-5,6,7,8-tetrahydrofolate. The enzyme catalyses IMP + H2O = 5-formamido-1-(5-phospho-D-ribosyl)imidazole-4-carboxamide. It functions in the pathway purine metabolism; IMP biosynthesis via de novo pathway; 5-formamido-1-(5-phospho-D-ribosyl)imidazole-4-carboxamide from 5-amino-1-(5-phospho-D-ribosyl)imidazole-4-carboxamide (10-formyl THF route): step 1/1. The protein operates within purine metabolism; IMP biosynthesis via de novo pathway; IMP from 5-formamido-1-(5-phospho-D-ribosyl)imidazole-4-carboxamide: step 1/1. This chain is Bifunctional purine biosynthesis protein PurH, found in Leptospira borgpetersenii serovar Hardjo-bovis (strain JB197).